The primary structure comprises 878 residues: DNA mismatch repair protein MutS (878 aa).

629–636 (GPNMAGKS) contacts ATP.

The protein belongs to the DNA mismatch repair MutS family.

Its function is as follows. This protein is involved in the repair of mismatches in DNA. It is possible that it carries out the mismatch recognition step. This protein has a weak ATPase activity. This is DNA mismatch repair protein MutS from Roseobacter denitrificans (strain ATCC 33942 / OCh 114) (Erythrobacter sp. (strain OCh 114)).